Reading from the N-terminus, the 90-residue chain is Barrier-to-autointegration factor-like protein (90 aa).

In terms of assembly, homodimer. Heterodimerizes with BANF1.

It is found in the nucleus. It localises to the cytoplasm. May play a role in BANF1 regulation and influence tissue-specific roles of BANF1. The sequence is that of Barrier-to-autointegration factor-like protein (Banf2) from Mus musculus (Mouse).